The sequence spans 398 residues: Serine/threonine-protein phosphatase 4 regulatory subunit 2-B (398 aa).

The tract at residues 138–398 (SSEKNTSPSL…NAPEEPMEQD (261 aa)) is disordered. Polar residues-rich tracts occupy residues 139-149 (SEKNTSPSLNR), 156-170 (PSNS…NVNG), and 183-193 (TLSSPMNTNGL). Positions 197–211 (MENKESDLQQKEKSL) are enriched in basic and acidic residues. Polar residues predominate over residues 278–294 (ASTSADKGKESCQTAQT). The span at 338–366 (SESACSLNSEEPNSAAAAASTAGTDSSEG) shows a compositional bias: low complexity.

The protein belongs to the PPP4R2 family. Serine/threonine-protein phosphatase 4 (PP4) occurs in different assemblies of the catalytic and one or more regulatory subunits.

In terms of biological role, regulatory subunit of serine/threonine-protein phosphatase 4 (PP4). The protein is Serine/threonine-protein phosphatase 4 regulatory subunit 2-B (ppp4r2-b) of Xenopus laevis (African clawed frog).